Consider the following 267-residue polypeptide: Probable membrane transporter protein MJ0441 (267 aa).

Transmembrane regions (helical) follow at residues 10–30 (LLLL…GSLF), 31–51 (GIGG…YFGI), 55–75 (VKFA…ISIF), 87–107 (ASIT…FLVV), 158–178 (FLSG…LAMA), 185–205 (AVAI…ISYL), and 213–233 (IYNI…PIIY).

The protein belongs to the 4-toluene sulfonate uptake permease (TSUP) (TC 2.A.102) family.

The protein resides in the cell membrane. The sequence is that of Probable membrane transporter protein MJ0441 from Methanocaldococcus jannaschii (strain ATCC 43067 / DSM 2661 / JAL-1 / JCM 10045 / NBRC 100440) (Methanococcus jannaschii).